Consider the following 295-residue polypeptide: MSVERWVFPGCSVMARFRRGLSDLGGRVRNIGDVMEHPLVELGVSYAALLSVIVVVVEYTMQLSGEYLVRLYLVDLILVIILWADYAYRAYKSGDPAGYVKKTLYEIPALVPAGLLALIEGHLAGLGLFRLVRLLRFLRILLIISRGSKFLSAIADAADKIRFYHLFGAVMLTVLYGAFAIYIVEYPDPNSSIKSVFDALWWAVVTATTVGYGDVVPATPIGKVIGIAVMLTGISALTLLIGTVSNMFQKILVGEPEPSCSPAKLAEMVSSMSEEEFEEFVRTLKNLRRLENSMK.

Over 1 to 38 (MSVERWVFPGCSVMARFRRGLSDLGGRVRNIGDVMEHP) the chain is Cytoplasmic. A helical membrane pass occupies residues 39 to 63 (LVELGVSYAALLSVIVVVVEYTMQL). Over 64–67 (SGEY) the chain is Extracellular. Residues 68–92 (LVRLYLVDLILVIILWADYAYRAYK) traverse the membrane as a helical segment. The Cytoplasmic portion of the chain corresponds to 93–96 (SGDP). The segment at residues 97-105 (AGYVKKTLY) is an intramembrane region (helical). Topologically, residues 106–108 (EIP) are extracellular. The helical; Voltage-sensor transmembrane segment at 109–125 (ALVPAGLLALIEGHLAG) threads the bilayer. The Cytoplasmic segment spans residues 126-128 (LGL). Residues 129 to 145 (FRLVRLLRFLRILLIIS) form a helical; Voltage-sensor membrane-spanning segment. The Cytoplasmic portion of the chain corresponds to 146–159 (RGSKFLSAIADAAD). The helical transmembrane segment at 160–184 (KIRFYHLFGAVMLTVLYGAFAIYIV) threads the bilayer. At 185-195 (EYPDPNSSIKS) the chain is on the extracellular side. The pore-forming intramembrane region spans 196-208 (VFDALWWAVVTAT). The Selectivity filter signature appears at 209–214 (TVGYGD). The Extracellular segment spans residues 209–221 (TVGYGDVVPATPI). Residues 222-253 (GKVIGIAVMLTGISALTLLIGTVSNMFQKILV) traverse the membrane as a helical segment. Topologically, residues 254-295 (GEPEPSCSPAKLAEMVSSMSEEEFEEFVRTLKNLRRLENSMK) are cytoplasmic.

This sequence belongs to the potassium channel family.

The protein localises to the cell membrane. Mediates a strong voltage-dependent potassium ion permeability of excitable membranes. Assuming opened or closed conformations in response to the voltage difference across the membrane, the protein forms a potassium-selective channel through which potassium ions may pass in accordance with their electrochemical gradient. The protein is Voltage-gated potassium channel of Aeropyrum pernix (strain ATCC 700893 / DSM 11879 / JCM 9820 / NBRC 100138 / K1).